The primary structure comprises 106 residues: Iron-sulfur cluster assembly protein CyaY (106 aa).

It belongs to the frataxin family.

In terms of biological role, involved in iron-sulfur (Fe-S) cluster assembly. May act as a regulator of Fe-S biogenesis. This is Iron-sulfur cluster assembly protein CyaY from Escherichia coli (strain SMS-3-5 / SECEC).